The sequence spans 924 residues: DNA repair and recombination protein RDH54 (924 aa).

Over residues 1–10 (MQIPKYENKP) the composition is skewed to basic and acidic residues. Disordered regions lie at residues 1–21 (MQIPKYENKPFKPPRRVGSNK) and 155–183 (EALSQNMGNPNPPTTSTTETVPSTKNDGG). Positions 168–178 (TTSTTETVPST) are enriched in low complexity. The Helicase ATP-binding domain occupies 299–487 (LENDSDISGC…FTIIDFINPG (189 aa)). 346–353 (IPLTGLCK) is a binding site for ATP. Positions 472-475 (NDLN) match the DEGH box motif. Residue Lys-615 forms a Glycyl lysine isopeptide (Lys-Gly) (interchain with G-Cter in ubiquitin) linkage. The region spanning 631 to 790 (KLRVLMTLLE…DSEMRNKESS (160 aa)) is the Helicase C-terminal domain.

Belongs to the SNF2/RAD54 helicase family. In terms of assembly, interacts with RAD51 and DMC1.

It localises to the nucleus. The enzyme catalyses ATP + H2O = ADP + phosphate + H(+). Its function is as follows. Involved in the recombinational repair of double-strand breaks (DSB) in DNA during mitosis and meiosis. Has DNA dependent ATPase activity. Promotes D-loop (displacement loop) formation with RAD51 recombinase. Modifies the topology of double-stranded DNA during the D-loop reaction to facilitate the invasion of the homologous duplex molecule by the initiating single-stranded DNA substrate. Required for adaptation from G2/M checkpoint arrest induced by a double strand break, by participating in monitoring the extent of single-stranded DNA produced by resection of DNA ends. This role is distinct from its roles in recombination. Promotes colocalization of RAD51 and DMC1 during meiotic recombination. Involved in crossover interference. This chain is DNA repair and recombination protein RDH54 (RDH54), found in Saccharomyces cerevisiae (strain RM11-1a) (Baker's yeast).